The following is a 142-amino-acid chain: Large ribosomal subunit protein uL13 (142 aa).

It belongs to the universal ribosomal protein uL13 family. Part of the 50S ribosomal subunit.

Functionally, this protein is one of the early assembly proteins of the 50S ribosomal subunit, although it is not seen to bind rRNA by itself. It is important during the early stages of 50S assembly. In Yersinia enterocolitica serotype O:8 / biotype 1B (strain NCTC 13174 / 8081), this protein is Large ribosomal subunit protein uL13.